We begin with the raw amino-acid sequence, 677 residues long: DNA ligase (677 aa).

Residues 38-42, 87-88, and Glu119 each bind NAD(+); these read DSVYD and SL. The active-site N6-AMP-lysine intermediate is the Lys121. Residues Arg142, Glu179, Lys296, and Lys320 each coordinate NAD(+). Positions 414, 417, 432, and 438 each coordinate Zn(2+). A BRCT domain is found at 595–677; it reads VVKSEIAGKT…LKLLKSKGVF (83 aa).

The protein belongs to the NAD-dependent DNA ligase family. LigA subfamily. Mg(2+) serves as cofactor. It depends on Mn(2+) as a cofactor.

The enzyme catalyses NAD(+) + (deoxyribonucleotide)n-3'-hydroxyl + 5'-phospho-(deoxyribonucleotide)m = (deoxyribonucleotide)n+m + AMP + beta-nicotinamide D-nucleotide.. Its function is as follows. DNA ligase that catalyzes the formation of phosphodiester linkages between 5'-phosphoryl and 3'-hydroxyl groups in double-stranded DNA using NAD as a coenzyme and as the energy source for the reaction. It is essential for DNA replication and repair of damaged DNA. The sequence is that of DNA ligase from Coxiella burnetii (strain CbuG_Q212) (Coxiella burnetii (strain Q212)).